A 160-amino-acid chain; its full sequence is Ribosomal RNA large subunit methyltransferase H (160 aa).

S-adenosyl-L-methionine contacts are provided by leucine 76 and glycine 108.

Belongs to the RNA methyltransferase RlmH family. As to quaternary structure, homodimer.

The protein resides in the cytoplasm. The catalysed reaction is pseudouridine(1915) in 23S rRNA + S-adenosyl-L-methionine = N(3)-methylpseudouridine(1915) in 23S rRNA + S-adenosyl-L-homocysteine + H(+). In terms of biological role, specifically methylates the pseudouridine at position 1915 (m3Psi1915) in 23S rRNA. The chain is Ribosomal RNA large subunit methyltransferase H from Rhodopseudomonas palustris (strain BisB5).